A 205-amino-acid chain; its full sequence is Probable GTP-binding protein EngB (205 aa).

The 188-residue stretch at 8-195 folds into the EngB-type G domain; it reads RDAEVVLIGR…NEAVRHHLHE (188 aa). Residues 16–23, 41–45, 60–63, 140–143, and 175–177 each bind GTP; these read GRSNVGKS, GVTRS, DLPG, NKMD, and ISA. Ser23 and Thr43 together coordinate Mg(2+).

This sequence belongs to the TRAFAC class TrmE-Era-EngA-EngB-Septin-like GTPase superfamily. EngB GTPase family. Requires Mg(2+) as cofactor.

In terms of biological role, necessary for normal cell division and for the maintenance of normal septation. In Haloarcula marismortui (strain ATCC 43049 / DSM 3752 / JCM 8966 / VKM B-1809) (Halobacterium marismortui), this protein is Probable GTP-binding protein EngB.